The chain runs to 140 residues: Cysteine desulfuration protein SufE (140 aa).

Cys51 functions as the Cysteine persulfide intermediate in the catalytic mechanism.

The protein belongs to the SufE family. In terms of assembly, homodimer. Interacts with SufS.

It localises to the cytoplasm. It participates in cofactor biosynthesis; iron-sulfur cluster biosynthesis. Its function is as follows. Participates in cysteine desulfuration mediated by SufS. Cysteine desulfuration mobilizes sulfur from L-cysteine to yield L-alanine and constitutes an essential step in sulfur metabolism for biosynthesis of a variety of sulfur-containing biomolecules. Functions as a sulfur acceptor for SufS, by mediating the direct transfer of the sulfur atom from the S-sulfanylcysteine of SufS, an intermediate product of cysteine desulfuration process. The sequence is that of Cysteine desulfuration protein SufE from Yersinia pestis bv. Antiqua (strain Antiqua).